A 560-amino-acid polypeptide reads, in one-letter code: Glutamate--tRNA ligase, chloroplastic/mitochondrial (560 aa).

An L-glutamate-binding site is contributed by 47–49 (RFA). The 'HIGH' region signature appears at 50 to 60 (PSPTGNLHVGG). Histidine 57 lines the ATP pocket. L-glutamate-binding positions include glutamate 83, 235-239 (YNFCV), and arginine 253. ATP-binding positions include glutamate 256 and 291 to 295 (KLSKR). Positions 291–295 (KLSKR) match the 'KMSKS' region motif.

Belongs to the class-I aminoacyl-tRNA synthetase family. Glutamate--tRNA ligase type 1 subfamily.

The protein localises to the plastid. The protein resides in the chloroplast. It localises to the mitochondrion. It catalyses the reaction tRNA(Glu) + L-glutamate + ATP = L-glutamyl-tRNA(Glu) + AMP + diphosphate. Functionally, catalyzes the attachment of glutamate to tRNA(Glu) in a two-step reaction: glutamate is first activated by ATP to form Glu-AMP and then transferred to the acceptor end of tRNA(Glu). This chain is Glutamate--tRNA ligase, chloroplastic/mitochondrial, found in Hordeum vulgare (Barley).